Consider the following 735-residue polypeptide: Diacylglycerol kinase alpha (735 aa).

EF-hand domains are found at residues 110 to 145 (RPED…MMRV) and 155 to 190 (ELRP…TVPL). Positions 123, 125, 127, 134, 168, 170, 172, 174, and 179 each coordinate Ca(2+). 2 Phorbol-ester/DAG-type zinc fingers span residues 205-253 (QHMW…ALPC) and 269-319 (SHVW…GHEC). Residues 372–506 (PNTHPLLVFV…MDRWSVEVIP (135 aa)) enclose the DAGKc domain. N6-acetyllysine is present on K484.

The protein belongs to the eukaryotic diacylglycerol kinase family. As to quaternary structure, monomer. In terms of tissue distribution, expressed in lymphocytes.

The protein localises to the cytoplasm. It localises to the cytosol. It catalyses the reaction a 1,2-diacyl-sn-glycerol + ATP = a 1,2-diacyl-sn-glycero-3-phosphate + ADP + H(+). The enzyme catalyses a 1-O-alkyl-sn-glycerol + ATP = a 1-O-alkyl-sn-glycero-3-phosphate + ADP + H(+). The catalysed reaction is 1-O-alkyl-2-acyl-sn-glycerol + ATP = 1-O-alkyl-2-acyl-sn-glycero-3-phosphate + ADP + H(+). It carries out the reaction 1,2-dihexadecanoyl-sn-glycerol + ATP = 1,2-dihexadecanoyl-sn-glycero-3-phosphate + ADP + H(+). It catalyses the reaction 1-hexadecanoyl-2-(9Z-octadecenoyl)-sn-glycerol + ATP = 1-hexadecanoyl-2-(9Z-octadecenoyl)-sn-glycero-3-phosphate + ADP + H(+). The enzyme catalyses 2-(9Z-octadecenoyl)-glycerol + ATP = 2-(9Z-octadecenoyl)-sn-glycero-3-phosphate + ADP + H(+). The catalysed reaction is 1,2-di-(9Z-octadecenoyl)-sn-glycerol + ATP = 1,2-di-(9Z-octadecenoyl)-sn-glycero-3-phosphate + ADP + H(+). It carries out the reaction 1-octadecanoyl-2-(5Z,8Z,11Z,14Z-eicosatetraenoyl)-sn-glycerol + ATP = 1-octadecanoyl-2-(5Z,8Z,11Z,14Z-eicosatetraenoyl)-sn-glycero-3-phosphate + ADP + H(+). It catalyses the reaction 1,2-didecanoyl-sn-glycerol + ATP = 1,2-didecanoyl-sn-glycero-3-phosphate + ADP + H(+). The enzyme catalyses 1-O-hexadecyl-2-acetyl-sn-glycerol + ATP = 1-O-hexadecyl-2-acetyl-sn-glycero-3-phosphate + ADP + H(+). The catalysed reaction is 1-O-hexadecyl-2-(5Z,8Z,11Z,14Z-eicosatetraenoyl)-sn-glycerol + ATP = 1-O-hexadecyl-2-(5Z,8Z,11Z,14Z-eicosatetraenoyl)-sn-glycero-3-phosphate + ADP + H(+). It carries out the reaction 1-O-hexadecyl-2-(9Z-octadecenoyl)-sn-glycerol + ATP = 1-O-hexadecyl-2-(9Z-octadecenoyl)-sn-glycero-3-phosphate + ADP + H(+). It catalyses the reaction 1-O-hexadecyl-sn-glycerol + ATP = 1-O-hexadecyl-sn-glycero-3-phosphate + ADP + H(+). The protein operates within lipid metabolism; glycerolipid metabolism. With respect to regulation, stimulated by calcium and phosphatidylserine. Functionally, diacylglycerol kinase that converts diacylglycerol/DAG into phosphatidic acid/phosphatidate/PA and regulates the respective levels of these two bioactive lipids. Thereby, acts as a central switch between the signaling pathways activated by these second messengers with different cellular targets and opposite effects in numerous biological processes. Also plays an important role in the biosynthesis of complex lipids. Can also phosphorylate 1-alkyl-2-acylglycerol in vitro as efficiently as diacylglycerol provided it contains an arachidonoyl group. Also involved in the production of alkyl-lysophosphatidic acid, another bioactive lipid, through the phosphorylation of 1-alkyl-2-acetyl glycerol. The protein is Diacylglycerol kinase alpha (DGKA) of Homo sapiens (Human).